We begin with the raw amino-acid sequence, 321 residues long: Coproporphyrin III ferrochelatase (321 aa).

The Fe(2+) site is built by His185 and Glu267.

Belongs to the ferrochelatase family.

It is found in the cytoplasm. The enzyme catalyses Fe-coproporphyrin III + 2 H(+) = coproporphyrin III + Fe(2+). The protein operates within porphyrin-containing compound metabolism; protoheme biosynthesis. Involved in coproporphyrin-dependent heme b biosynthesis. Catalyzes the insertion of ferrous iron into coproporphyrin III to form Fe-coproporphyrin III. The chain is Coproporphyrin III ferrochelatase from Lacticaseibacillus paracasei (strain ATCC 334 / BCRC 17002 / CCUG 31169 / CIP 107868 / KCTC 3260 / NRRL B-441) (Lactobacillus paracasei).